Here is a 341-residue protein sequence, read N- to C-terminus: Processive diacylglycerol beta-glycosyltransferase (341 aa).

This sequence belongs to the glycosyltransferase 2 family. Mg(2+) serves as cofactor.

It is found in the cell membrane. It carries out the reaction a 1,2-diacyl-sn-glycerol + UDP-alpha-D-glucose = a 1,2-diacyl-3-O-(beta-D-glucopyranosyl)-sn-glycerol + UDP + H(+). The enzyme catalyses a 1,2-diacyl-sn-glycerol + UDP-alpha-D-galactose = a 1,2-diacyl-3-O-(beta-D-galactosyl)-sn-glycerol + UDP + H(+). The catalysed reaction is a 1,2-diacyl-3-O-(beta-D-galactosyl)-sn-glycerol + UDP-alpha-D-glucose = a 1,2-diacyl-3-O-[beta-D-glucopyranosyl-(1-&gt;6)-beta-D-galactopyranosyl]-sn-glycerol + UDP + H(+). It catalyses the reaction a 1,2-diacyl-3-O-(beta-D-galactosyl)-sn-glycerol + UDP-alpha-D-galactose = a 1,2-diacyl-3-O-[beta-D-galactosyl-(1-&gt;6)-beta-D-galactosyl]-sn-glycerol + UDP + H(+). Its activity is regulated as follows. Activated by the negatively charged lipid phosphatidylglycerol (PG). Processive glycosyltransferase involved in the biosynthesis of both the non-bilayer-prone beta-monoglycosyldiacylglycerol and the bilayer-forming membrane lipid glucosyl-galactosyldiacylglycerol and digalactosyl-diacylglycerol. These components contribute to regulate the properties and stability of the membrane. Catalyzes sequentially the transfers of glucosyl or galactosyl residues from UDP-Glc or UDP-Gal to diacylglycerol (DAG) acceptor to form the corresponding beta-glycosyl-DAG (3-O-(beta-D-glycopyranosyl)-1,2-diacyl-sn-glycerol). Then, only beta-galactosyl-DAG (3-O-(beta-D-galactopyranosyl)-1,2-diacyl-sn-glycerol) can act as acceptor to give the beta-glycosyl-beta-galactosyl-DAG product (3-O-(beta-D-glycopyranosyl-(1-&gt;6)-D-galactopyranosyl)-1,2-diacyl-sn-glycerol). It can also use alpha-Gal-beta-Gal-DAG, ceramide (Cer) and beta-Gal-Cer as sugar acceptors. The enzyme is supposed to be mainly a galactosyltransferase, with higher glycosyltransferase activity for the addition of the second glycosyl on beta-Gal-DAG as acceptor. The main glycolipid produced in vivo is beta-Glc-beta-Gal-DAG with a beta-1,6 linkage. The protein is Processive diacylglycerol beta-glycosyltransferase of Mycoplasma pneumoniae (strain ATCC 29342 / M129 / Subtype 1) (Mycoplasmoides pneumoniae).